A 218-amino-acid polypeptide reads, in one-letter code: Thiopurine S-methyltransferase (218 aa).

Trp-10, Leu-45, Glu-66, and Arg-123 together coordinate S-adenosyl-L-methionine.

The protein belongs to the class I-like SAM-binding methyltransferase superfamily. TPMT family.

The protein resides in the cytoplasm. The enzyme catalyses S-adenosyl-L-methionine + a thiopurine = S-adenosyl-L-homocysteine + a thiopurine S-methylether.. The polypeptide is Thiopurine S-methyltransferase (Shewanella baltica (strain OS195)).